Here is a 184-residue protein sequence, read N- to C-terminus: Tumor necrosis factor alpha-induced protein 8-like protein 2 (184 aa).

S3 bears the Phosphoserine mark.

The protein belongs to the TNFAIP8 family. TNFAIP8L2 subfamily. As to quaternary structure, may interact with CASP8; however, such result is unclear since could not reproduce the interaction with CASP8. Interacts with RAC1. Phosphorylated by TAK1/MAP3K7; this phosphorylation triggers association with BTRC and subsequent ubiquitination and degradation. Post-translationally, ubiquitinated in a BTRC-depdent manner; leading to degradation mediated through the proteasome pathway. Expressed in thymus, spleen, lymph node and small intestine, but not in liver, heart, muscle, testis, spinal cord or brain. Up-regulated in the spinal cord of mice with experimental autoimmune encephalomyelitis. Constitutively expressed by macrophages, B and T-lymphocytes at various developmental stages.

It localises to the cytoplasm. The protein localises to the nucleus. The protein resides in the lysosome. Functionally, acts as a negative regulator of innate and adaptive immunity by maintaining immune homeostasis. Plays a regulatory role in the Toll-like signaling pathway by determining the strength of LPS-induced signaling and gene expression. Inhibits TCR-mediated T-cell activation and negatively regulate T-cell function to prevent hyperresponsiveness. Also inhibits autolysosome formation via negatively modulating MTOR activation by interacting with RAC1 and promoting the disassociation of the RAC1-MTOR complex. Plays an essential role in NK-cell biology by acting as a checkpoint and displaying an expression pattern correlating with NK-cell maturation process and by negatively regulating NK-cell maturation and antitumor immunity. Mechanistically, suppresses IL-15-triggered mTOR activity in NK-cells. This chain is Tumor necrosis factor alpha-induced protein 8-like protein 2 (Tnfaip8l2), found in Mus musculus (Mouse).